The primary structure comprises 661 residues: Putative K(+) efflux antiporter KefB (661 aa).

11 helical membrane passes run 5–25, 31–51, 53–73, 100–120, 154–174, 178–198, 224–244, 273–293, 296–316, 330–350, and 360–380; these read GTLIQLLFLLGFMVFMVMLFQ, ASIAYLLVGVLLGAHTAGPVI, EGYIHKIAEFGIVFLLFTIGL, LLVALLLWAMGVASVVAFVIG, VFQDITAVPFIIVIPVLGVAM, IASTLGMALFKAVLATALVVL, VLLVCLAAAWLTQSLGLSMAF, LLGIFFVSIGMLLDPMLLPEI, IALAGALLLLLIKIVLVTALV, GLILAVGGEFGFALLALALEG, and IILTSVLLSMMLAVFLIRYNL. The RCK N-terminal domain maps to 410–527; sequence QQHVVIAGFG…RQAGATEVIP (118 aa). One can recognise an RCK C-terminal domain in the interval 571-656; it reads RGSADLLKTQ…LEQASLVLTH (86 aa).

The protein belongs to the monovalent cation:proton antiporter 2 (CPA2) transporter (TC 2.A.37) family. KEA (TC 2.A.37.1) subfamily.

Its subcellular location is the cell membrane. Functionally, may operate as a K(+)/H(+) antiporter. The sequence is that of Putative K(+) efflux antiporter KefB (kefB) from Alkalimonas amylolytica.